The chain runs to 320 residues: Aminoacyl tRNA synthase complex-interacting multifunctional protein 2 (320 aa).

Residues 82 to 162 are interaction with PRKN; that stretch reads TPDADLDVTN…HTHSSVKSVP (81 aa). An interaction with TP53 region spans residues 162–225; that stretch reads PENLLKCFGE…FLFSLFGQKH (64 aa). Residues 220-317 form the GST C-terminal domain; the sequence is LFGQKHNAVN…NLAPFNTALK (98 aa).

As to quaternary structure, part of the multisynthetase complex (MSC), a multisubunit complex that groups tRNA ligases for Arg (RARS1), Asp (DARS1), Gln (QARS1), Ile (IARS1), Leu (LARS1), Lys (KARS1), Met (MARS1) the bifunctional ligase for Glu and Pro (EPRS1) and the auxiliary subunits AIMP1/p43, AIMP2/p38 and EEF1E1/p18. Interacts (via N-terminus) with KARS1. Interacts with EPRS1. Forms a linear complex that contains MARS1, EEF1E1, EPRS1 and AIMP2 that is at the core of the multisubunit complex. Binds FUBP1 (via C-terminus). Interacts in both its unphosphorylated and phosphorylated forms with p53/TP53 (via N-terminus) in the nucleus following UV irradiation. Interacts (via N-terminus) with PRKN/parkin (via first RING-type domain). Interacts with TARS3. Post-translationally, phosphorylated on serine residues in response to UV irradiation. In terms of processing, ubiquitinated by PRKN, leading to its degradation by the proteasome. Mutant PRKN fails to ubiquitinate AIMP2 efficiently, allowing its accumulation which may contribute to neurodegeneration associated with Parkinson disease.

It is found in the cytoplasm. It localises to the cytosol. Its subcellular location is the nucleus. In terms of biological role, required for assembly and stability of the aminoacyl-tRNA synthase complex. Mediates ubiquitination and degradation of FUBP1, a transcriptional activator of MYC, leading to MYC down-regulation which is required for aveolar type II cell differentiation. Blocks MDM2-mediated ubiquitination and degradation of p53/TP53. Functions as a proapoptotic factor. In Homo sapiens (Human), this protein is Aminoacyl tRNA synthase complex-interacting multifunctional protein 2 (AIMP2).